The following is a 528-amino-acid chain: Bifunctional purine biosynthesis protein PurH (528 aa).

Positions 2–149 constitute an MGS-like domain; the sequence is TDLAPLRRAL…KNHGFVSVVV (148 aa).

This sequence belongs to the PurH family.

The catalysed reaction is (6R)-10-formyltetrahydrofolate + 5-amino-1-(5-phospho-beta-D-ribosyl)imidazole-4-carboxamide = 5-formamido-1-(5-phospho-D-ribosyl)imidazole-4-carboxamide + (6S)-5,6,7,8-tetrahydrofolate. The enzyme catalyses IMP + H2O = 5-formamido-1-(5-phospho-D-ribosyl)imidazole-4-carboxamide. It functions in the pathway purine metabolism; IMP biosynthesis via de novo pathway; 5-formamido-1-(5-phospho-D-ribosyl)imidazole-4-carboxamide from 5-amino-1-(5-phospho-D-ribosyl)imidazole-4-carboxamide (10-formyl THF route): step 1/1. The protein operates within purine metabolism; IMP biosynthesis via de novo pathway; IMP from 5-formamido-1-(5-phospho-D-ribosyl)imidazole-4-carboxamide: step 1/1. This Roseobacter denitrificans (strain ATCC 33942 / OCh 114) (Erythrobacter sp. (strain OCh 114)) protein is Bifunctional purine biosynthesis protein PurH.